We begin with the raw amino-acid sequence, 130 residues long: 3-aminoacrylate deaminase RutC (130 aa).

Belongs to the RutC family.

It carries out the reaction (Z)-3-aminoacrylate + H2O + H(+) = 3-oxopropanoate + NH4(+). Its function is as follows. Involved in pyrimidine catabolism. Catalyzes the deamination of 3-aminoacrylate to malonic semialdehyde, a reaction that can also occur spontaneously. RutC may facilitate the reaction and modulate the metabolic fitness, rather than catalyzing essential functions. The protein is 3-aminoacrylate deaminase RutC of Variovorax paradoxus (strain S110).